The primary structure comprises 399 residues: MRSLSLAWLLGGITLLAASVSCSRTENLAPGRNNSKGRSLIGRLETQPPITGKGVPVEPGFSIDEFSASILTGKLTTVFLPVVYIIVFVIGLPSNGMALWIFLFRTKKKHPAVIYMANLALADLLSVIWFPLKISYHLHGNNWVYGEALCKVLIGFFYGNMYCSILFMTCLSVQRYWVIVNPMGHPRKKANIAVGVSLAIWLLIFLVTIPLYVMKQTIYIPALNITTCHDVLPEEVLVGDMFNYFLSLAIGVFLFPALLTASAYVLMIKTLRSSAMDEHSEKKRQRAIRLIITVLAMYFICFAPSNLLLVVHYFLIKTQRQSHVYALYLVALCLSTLNSCIDPFVYYFVSKDFRDHARNALLCRSVRTVNRMQISLSSNKFSRKSGSYSSSSTSVKTSY.

Residues 1–25 (MRSLSLAWLLGGITLLAASVSCSRT) form the signal peptide. Positions 26–38 (ENLAPGRNNSKGR) are cleaved as a propeptide — removed for receptor activation. Asn-33 is a glycosylation site (N-linked (GlcNAc...) asparagine). Over 39-73 (SLIGRLETQPPITGKGVPVEPGFSIDEFSASILTG) the chain is Extracellular. The helical transmembrane segment at 74–103 (KLTTVFLPVVYIIVFVIGLPSNGMALWIFL) threads the bilayer. Residues 104 to 110 (FRTKKKH) lie on the Cytoplasmic side of the membrane. A helical membrane pass occupies residues 111–139 (PAVIYMANLALADLLSVIWFPLKISYHLH). The Extracellular segment spans residues 140-151 (GNNWVYGEALCK). Cys-150 and Cys-228 are joined by a disulfide. A helical membrane pass occupies residues 152–179 (VLIGFFYGNMYCSILFMTCLSVQRYWVI). Residues 180–185 (VNPMGH) lie on the Cytoplasmic side of the membrane. Residues 186 to 213 (PRKKANIAVGVSLAIWLLIFLVTIPLYV) traverse the membrane as a helical segment. Residues 214–237 (MKQTIYIPALNITTCHDVLPEEVL) are Extracellular-facing. Asn-224 carries an N-linked (GlcNAc...) asparagine glycan. The chain crosses the membrane as a helical span at residues 238 to 271 (VGDMFNYFLSLAIGVFLFPALLTASAYVLMIKTL). Topologically, residues 272 to 279 (RSSAMDEH) are cytoplasmic. The chain crosses the membrane as a helical span at residues 280–319 (SEKKRQRAIRLIITVLAMYFICFAPSNLLLVVHYFLIKTQ). Residues 320 to 325 (RQSHVY) lie on the Extracellular side of the membrane. Residues 326–349 (ALYLVALCLSTLNSCIDPFVYYFV) form a helical membrane-spanning segment. Residues 350–399 (SKDFRDHARNALLCRSVRTVNRMQISLSSNKFSRKSGSYSSSSTSVKTSY) lie on the Cytoplasmic side of the membrane. Cys-363 carries the S-palmitoyl cysteine lipid modification.

This sequence belongs to the G-protein coupled receptor 1 family. As to quaternary structure, interacts with TLR4, COPS5 and TMED2. Interacts with GNAQ, GNA11, GNA12, GNA13 and GNA14. A proteolytic cleavage generates a new N-terminus that functions as a tethered ligand. Activating serine proteases include trypsin, mast cell tryptase, coagulation factors VII and Xa, myeloblastin/PRTN3 and membrane-type serine protease 1/ST14. Proposed subsequent cleavage by serine proteases is leading to receptor deactivation and include neutrophil elastase and cathepsin G. At least in part, implicated proteases are also shown to activate the receptor; the glycosylation status of the receptor is thought to contribute to the difference. Post-translationally, N-glycosylated and sialylated. In terms of processing, multiple phosphorylated on serine and threonine residues in the cytoplasmic region upon receptor activation; required for receptor desensitization and recruitment of beta-arrestin. Monoubiquitinated by Cbl at the plasma membrane and in early endosomes; not required for receptor endocytosis but for translocation to late endosomes or lysosomes. Deubiquitination involves Stambp and Usp8; required for lysosomal trafficking and receptor degradation.

Its subcellular location is the cell membrane. Receptor for trypsin and trypsin-like enzymes coupled to G proteins. Its function is mediated through the activation of several signaling pathways including phospholipase C (PLC), intracellular calcium, mitogen-activated protein kinase (MAPK), I-kappaB kinase/NF-kappaB and Rho. Can also be transactivated by cleaved F2r/Par1. Involved in modulation of inflammatory responses and regulation of innate and adaptive immunity, and acts as a sensor for proteolytic enzymes generated during infection. Generally is promoting inflammation. Can signal synergistically with Tlr4 and probably Tlr2 in inflammatory responses and modulates Tlr3 signaling. Has a protective role in establishing the endothelial barrier; the activity involves coagulation factor X. Regulates endothelial cell barrier integrity during neutrophil extravasation, probably following proteolytic cleavage by PRTN3. Proposed to have a bronchoprotective role in airway epithelium, but also shown to compromise the airway epithelial barrier by interrupting E-cadherin adhesion. Involved in the regulation of vascular tone; activation results in hypotension presumably mediated by vasodilation. Associates with a subset of G proteins alpha subunits such as GNAQ, GNA11, GNA14, GNA12 and GNA13, but probably not with G(o)-alpha, G(i) subunit alpha-1 and G(i) subunit alpha-2. Believed to be a class B receptor which internalizes as a complex with arrestin and traffic with it to endosomal vesicles, presumably as desensitized receptor, for extended periods of time. Mediates inhibition of TNF-alpha stimulated JNK phosphorylation via coupling to GNAQ and GNA11; the function involves dissociation of Ripk1 and Tradd from Tnfr1. Mediates phosphorylation of nuclear factor NF-kappa-B RELA subunit at 'Ser-536'; the function involves Ikbkb and is predominantly independent of G proteins. Involved in cellular migration. Involved in cytoskeletal rearrangement and chemotaxis through beta-arrestin-promoted scaffolds; the function is independent of GNAQ and GNA11 and involves promotion of cofilin dephosphorylation and actin filament severing. Induces redistribution of Cops5 from the plasma membrane to the cytosol and activation of the JNK cascade is mediated by Cops5. Involved in the recruitment of leukocytes to the sites of inflammation and is the major PAR receptor capable of modulating eosinophil function such as pro-inflammatory cytokine secretion, superoxide production and degranulation. During inflammation promotes dendritic cell maturation, trafficking to the lymph nodes and subsequent T-cell activation. Involved in antimicrobial response of innate immune cells; activation enhances phagocytosis of Gram-positive and killing of Gram-negative bacteria. Acts synergistically with interferon-gamma in enhancing antiviral responses. Mediates activation of pro-inflammatory and pro-fibrotic responses in fibroblasts, triggered by coagulation factor Xa (F10). Probably mediates activation of barrier protective signaling responses in endothelial cells, triggered by coagulation factor Xa (F10). The sequence is that of Proteinase-activated receptor 2 (F2rl1) from Mus musculus (Mouse).